The following is a 273-amino-acid chain: MPLSDAPLGHNVAYPSEYNAALLFPIARAENRAGLGLDGALPFDGTDIWNAYELSWLDAKGKPRIAMASFRIPASSPNIIESKSFKLYLNSFNQTRLPNAQTLRDLLEKDLSAAAGAPVDMDFILPQRFDTLRIQELSGINLDKLDVEVDRYEPAPELLGCTGTGIIEETLMSRLLKSNCPVTGQPDWASVQIAYRGRPIDRAGLLKYIISFRQHAEFHEHCVERIFCDLMQACQPEQLTVYARYTRRGGLDINPWRSNAGASAPADLRGARQ.

Residue 80-82 (IES) coordinates substrate. 82–83 (SK) provides a ligand contact to NADPH. Catalysis depends on C180, which acts as the Thioimide intermediate. D187 (proton donor) is an active-site residue. 219–220 (HE) contacts substrate. 248–249 (RG) is an NADPH binding site.

This sequence belongs to the GTP cyclohydrolase I family. QueF type 2 subfamily. As to quaternary structure, homodimer.

It is found in the cytoplasm. The catalysed reaction is 7-aminomethyl-7-carbaguanine + 2 NADP(+) = 7-cyano-7-deazaguanine + 2 NADPH + 3 H(+). Its pathway is tRNA modification; tRNA-queuosine biosynthesis. Its function is as follows. Catalyzes the NADPH-dependent reduction of 7-cyano-7-deazaguanine (preQ0) to 7-aminomethyl-7-deazaguanine (preQ1). The sequence is that of NADPH-dependent 7-cyano-7-deazaguanine reductase from Bordetella avium (strain 197N).